A 465-amino-acid chain; its full sequence is Pancreatic triacylglycerol lipase (465 aa).

An N-terminal signal peptide occupies residues 1–16; it reads MLLLWILSLFLETVAG. Disulfide bonds link cysteine 20/cysteine 26 and cysteine 107/cysteine 118. The active-site Nucleophile is serine 169. Catalysis depends on aspartate 193, which acts as the Charge relay system. Ca(2+)-binding residues include glutamate 204, arginine 207, aspartate 209, and aspartate 212. The cysteines at positions 254 and 278 are disulfide-linked. Histidine 280 serves as the catalytic Charge relay system. Cystine bridges form between cysteine 302–cysteine 313 and cysteine 316–cysteine 321. N-linked (GlcNAc...) asparagine glycans are attached at residues asparagine 351, asparagine 398, and asparagine 425. The PLAT domain maps to 355-465; sequence WRYRIAVTLS…EEVLLTLQPC (111 aa). The cysteines at positions 449 and 465 are disulfide-linked.

Belongs to the AB hydrolase superfamily. Lipase family. Forms a 1:1 stoichiometric complex with (pro)colipase/CLPS.

The protein localises to the secreted. The catalysed reaction is a triacylglycerol + H2O = a diacylglycerol + a fatty acid + H(+). The enzyme catalyses 1,2,3-tributanoylglycerol + H2O = dibutanoylglycerol + butanoate + H(+). It carries out the reaction 1,2,3-tri-(9Z-octadecenoyl)-glycerol + H2O = di-(9Z)-octadecenoylglycerol + (9Z)-octadecenoate + H(+). It catalyses the reaction all-trans-retinyl hexadecanoate + H2O = all-trans-retinol + hexadecanoate + H(+). The catalysed reaction is 1,2-di-(9Z-octadecenoyl)-glycerol + H2O = (9Z-octadecenoyl)-glycerol + (9Z)-octadecenoate + H(+). Inhibited by bile salts, is reactivated by (pro)colipase/CLPS. Functionally, plays an important role in fat metabolism. It preferentially splits the esters of long-chain fatty acids at positions 1 and 3, producing mainly 2-monoacylglycerol and free fatty acids, and shows considerably higher activity against insoluble emulsified substrates than against soluble ones. The polypeptide is Pancreatic triacylglycerol lipase (PNLIP) (Cavia porcellus (Guinea pig)).